The following is a 469-amino-acid chain: Glutamate--tRNA ligase (469 aa).

A 'HIGH' region motif is present at residues Pro9–Gly19. 4 residues coordinate Zn(2+): Cys98, Cys100, Cys125, and Asp127. The short motif at Lys236–Arg240 is the 'KMSKS' region element. Lys239 contacts ATP.

Belongs to the class-I aminoacyl-tRNA synthetase family. Glutamate--tRNA ligase type 1 subfamily. In terms of assembly, monomer. Requires Zn(2+) as cofactor.

The protein resides in the cytoplasm. The enzyme catalyses tRNA(Glu) + L-glutamate + ATP = L-glutamyl-tRNA(Glu) + AMP + diphosphate. Its function is as follows. Catalyzes the attachment of glutamate to tRNA(Glu) in a two-step reaction: glutamate is first activated by ATP to form Glu-AMP and then transferred to the acceptor end of tRNA(Glu). In Shewanella baltica (strain OS185), this protein is Glutamate--tRNA ligase.